Reading from the N-terminus, the 1652-residue chain is Maestro heat-like repeat-containing protein family member 1 (1652 aa).

7 HEAT repeats span residues 3–41 (ETYA…SKPA), 260–300 (EEQL…VGSR), 344–382 (CCSP…AAAA), 385–423 (EVKK…HGYL), 1369–1407 (LMLL…GSPD), 1410–1448 (QTHS…LMDL), and 1616–1652 (QVDL…VKFA).

This sequence belongs to the MROH1 family. Homooligomer; homooligomerizes at lysosome scission sites.

The protein localises to the lysosome membrane. In terms of biological role, lysosome fission factor. Recruited to lysosomes by RAB7 (RAB7A or RAB7B) at scission sites and homooligomerizes to mediate the constriction and scission of lysosomal tubules. May sever membranes by inserting amphipathic helices into one bilayer leaflet. Lysosome fission is required to maintain their steady-state number, shape, size, composition and function, and to accomplish regeneration. This chain is Maestro heat-like repeat-containing protein family member 1 (MROH1), found in Bos taurus (Bovine).